The chain runs to 288 residues: MASLRDIKGRINSTKKTSQITKAMHMVSNSKLRRAEENAKSFYPYMEKMQDAVTAIGGSNSDANHPMLQKRPVKKTGYLVITCDKGLAGPYNANILKSVTQKIQERHNNNPAEYGILVIGRVGYDFLRARDYNVEGQIIGLSDQPSFKSIKDISHTAVSRFETGEYDELYMHYSHFISVLEQEVHERKILPISKEEVSGESKLSNYEFEPDKDAILEVILPQYAESLIYGAILDGKASEHASRMTAMKNATDNAKELIDDLSLQYNRARQAAITQQITEIVGGAAALE.

The protein belongs to the ATPase gamma chain family. In terms of assembly, F-type ATPases have 2 components, CF(1) - the catalytic core - and CF(0) - the membrane proton channel. CF(1) has five subunits: alpha(3), beta(3), gamma(1), delta(1), epsilon(1). CF(0) has three main subunits: a, b and c.

The protein resides in the cell membrane. Functionally, produces ATP from ADP in the presence of a proton gradient across the membrane. The gamma chain is believed to be important in regulating ATPase activity and the flow of protons through the CF(0) complex. This is ATP synthase gamma chain from Macrococcus caseolyticus (strain JCSC5402) (Macrococcoides caseolyticum).